The primary structure comprises 447 residues: Oxysterols receptor LXR-alpha (447 aa).

Residues 1 to 88 form a disordered region; it reads MSLWLEAPVP…LRPQKRKKGP (88 aa). The interval 1-96 is transactivation AF-1; required for ligand-independent transactivation function; sequence MSLWLEAPVP…GPAPKMLGNE (96 aa). The nuclear receptor DNA-binding region spans 95–170; that stretch reads NELCSVCGDK…AGMREECVLS (76 aa). 2 NR C4-type zinc fingers span residues 98–118 and 134–158; these read CSVC…CEGC and CHSG…LRKC. Residues 178 to 203 are disordered; that stretch reads KMKRQEEEQAQATSAPPRASSPPQVL. Positions 187-203 are enriched in low complexity; that stretch reads AQATSAPPRASSPPQVL. The segment at 205–447 is transactivation AF-2; required for ligand-dependent transactivation function; mediates interaction with CCAR2; that stretch reads QLSPEQLGMI…LLSEIWDVHE (243 aa). The region spanning 209–447 is the NR LBD domain; the sequence is EQLGMIEKLV…LLSEIWDVHE (239 aa).

This sequence belongs to the nuclear hormone receptor family. NR1 subfamily. Heterodimer of NR1H3 and RXR (retinoic acid receptor). Interacts with CCAR2 (via N-terminus) in a ligand-independent manner. Interacts with SIRT1 and this interaction is inhibited by CCAR2. In terms of processing, ubiquitinated by UBR5, leading to its degradation: UBR5 specifically recognizes and binds ligand-bound NR1H3 when it is not associated with coactivators (NCOAs). In presence of NCOAs, the UBR5-degron is not accessible, preventing its ubiquitination and degradation.

The protein localises to the nucleus. Its subcellular location is the cytoplasm. Nuclear receptor that exhibits a ligand-dependent transcriptional activation activity. Interaction with retinoic acid receptor (RXR) shifts RXR from its role as a silent DNA-binding partner to an active ligand-binding subunit in mediating retinoid responses through target genes defined by LXRES. LXRES are DR4-type response elements characterized by direct repeats of two similar hexanuclotide half-sites spaced by four nucleotides. Plays an important role in the regulation of cholesterol homeostasis, regulating cholesterol uptake through MYLIP-dependent ubiquitination of LDLR, VLDLR and LRP8. Interplays functionally with RORA for the regulation of genes involved in liver metabolism. Induces LPCAT3-dependent phospholipid remodeling in endoplasmic reticulum (ER) membranes of hepatocytes, driving SREBF1 processing and lipogenesis. Via LPCAT3, triggers the incorporation of arachidonate into phosphatidylcholines of ER membranes, increasing membrane dynamics and enabling triacylglycerols transfer to nascent very low-density lipoprotein (VLDL) particles. Via LPCAT3 also counteracts lipid-induced ER stress response and inflammation, likely by modulating SRC kinase membrane compartmentalization and limiting the synthesis of lipid inflammatory mediators. The sequence is that of Oxysterols receptor LXR-alpha (NR1H3) from Bos taurus (Bovine).